The primary structure comprises 391 residues: Dual-specificity RNA methyltransferase RlmN (391 aa).

Catalysis depends on Glu-112, which acts as the Proton acceptor. The Radical SAM core domain occupies 118–368 (ESDRGTLCIS…VRTPRGRDIL (251 aa)). Cysteines 125 and 371 form a disulfide. 3 residues coordinate [4Fe-4S] cluster: Cys-132, Cys-136, and Cys-139. S-adenosyl-L-methionine-binding positions include 197–198 (GE), Ser-229, 251–253 (SLH), and Asn-328. Cys-371 functions as the S-methylcysteine intermediate in the catalytic mechanism.

The protein belongs to the radical SAM superfamily. RlmN family. [4Fe-4S] cluster serves as cofactor.

It is found in the cytoplasm. The catalysed reaction is adenosine(2503) in 23S rRNA + 2 reduced [2Fe-2S]-[ferredoxin] + 2 S-adenosyl-L-methionine = 2-methyladenosine(2503) in 23S rRNA + 5'-deoxyadenosine + L-methionine + 2 oxidized [2Fe-2S]-[ferredoxin] + S-adenosyl-L-homocysteine. The enzyme catalyses adenosine(37) in tRNA + 2 reduced [2Fe-2S]-[ferredoxin] + 2 S-adenosyl-L-methionine = 2-methyladenosine(37) in tRNA + 5'-deoxyadenosine + L-methionine + 2 oxidized [2Fe-2S]-[ferredoxin] + S-adenosyl-L-homocysteine. Specifically methylates position 2 of adenine 2503 in 23S rRNA and position 2 of adenine 37 in tRNAs. m2A2503 modification seems to play a crucial role in the proofreading step occurring at the peptidyl transferase center and thus would serve to optimize ribosomal fidelity. The polypeptide is Dual-specificity RNA methyltransferase RlmN (Beijerinckia indica subsp. indica (strain ATCC 9039 / DSM 1715 / NCIMB 8712)).